The primary structure comprises 57 residues: uncharacterized protein (57 aa).

The chain crosses the membrane as a helical span at residues 12-34 (VIAVLSLFVFAVAVFFVGMALLT).

It is found in the membrane. This is an uncharacterized protein from Pasteurella multocida (strain Pm70).